Here is a 475-residue protein sequence, read N- to C-terminus: Sulfate adenylyltransferase subunit 1 (475 aa).

The tr-type G domain maps to 25-239; it reads KSLLRFLTCG…EVLETVEIQR (215 aa). The interval 34 to 41 is G1; the sequence is GSVDDGKS. 34–41 contacts GTP; it reads GSVDDGKS. Residues 92–96 are G2; that stretch reads GITID. The tract at residues 113 to 116 is G3; it reads DTPG. Residues 113-117 and 168-171 contribute to the GTP site; these read DTPGH and NKMD. The segment at 168–171 is G4; it reads NKMD. The G5 stretch occupies residues 206–208; sequence SAL.

It belongs to the TRAFAC class translation factor GTPase superfamily. Classic translation factor GTPase family. CysN/NodQ subfamily. In terms of assembly, heterodimer composed of CysD, the smaller subunit, and CysN.

The enzyme catalyses sulfate + ATP + H(+) = adenosine 5'-phosphosulfate + diphosphate. The protein operates within sulfur metabolism; hydrogen sulfide biosynthesis; sulfite from sulfate: step 1/3. Its function is as follows. With CysD forms the ATP sulfurylase (ATPS) that catalyzes the adenylation of sulfate producing adenosine 5'-phosphosulfate (APS) and diphosphate, the first enzymatic step in sulfur assimilation pathway. APS synthesis involves the formation of a high-energy phosphoric-sulfuric acid anhydride bond driven by GTP hydrolysis by CysN coupled to ATP hydrolysis by CysD. The sequence is that of Sulfate adenylyltransferase subunit 1 from Escherichia coli O9:H4 (strain HS).